The sequence spans 207 residues: Flavin-dependent thymidylate synthase (207 aa).

Residues 1 to 204 (MQITLLFHTP…KFIFEHCLHK (204 aa)) form the ThyX domain. Residues serine 50 and 74–76 (RHR) contribute to the FAD site. Residues 71 to 74 (EVAR), 84 to 86 (STR), and lysine 143 contribute to the dUMP site. The ThyX motif signature appears at 74–84 (RHRHTSPSVKS). FAD is bound by residues 159-161 (NAR) and asparagine 165. DUMP is bound at residue arginine 170. Arginine 170 (involved in ionization of N3 of dUMP, leading to its activation) is an active-site residue.

It belongs to the thymidylate synthase ThyX family. In terms of assembly, homotetramer. Requires FAD as cofactor.

It carries out the reaction dUMP + (6R)-5,10-methylene-5,6,7,8-tetrahydrofolate + NADPH + H(+) = dTMP + (6S)-5,6,7,8-tetrahydrofolate + NADP(+). The protein operates within pyrimidine metabolism; dTTP biosynthesis. Its function is as follows. Catalyzes the reductive methylation of 2'-deoxyuridine-5'-monophosphate (dUMP) to 2'-deoxythymidine-5'-monophosphate (dTMP) while utilizing 5,10-methylenetetrahydrofolate (mTHF) as the methyl donor, and NADPH and FADH(2) as the reductant. The polypeptide is Flavin-dependent thymidylate synthase (Campylobacter jejuni subsp. jejuni serotype O:2 (strain ATCC 700819 / NCTC 11168)).